The primary structure comprises 779 residues: Acyl-homoserine lactone acylase PvdQ (779 aa).

Positions 1–25 (MIISRPLCSFVFAGLSFAVILPAQA) are cleaved as a signal peptide. The propeptide at 202 to 223 (AQQAQALQLAAARNQRFALERG) is spacer peptide. The Nucleophile role is filled by Ser-224. Residues 731-746 (ESSNPQSAHSSDQTEA) show a composition bias toward polar residues. The segment at 731-750 (ESSNPQSAHSSDQTEAFSKK) is disordered.

The protein belongs to the peptidase S45 family. Heterodimer of an alpha subunit and a beta subunit processed from the same precursor.

It localises to the periplasm. The enzyme catalyses an N-acyl-L-homoserine lactone + H2O = L-homoserine lactone + a carboxylate. Catalyzes the deacylation of acyl-homoserine lactone (AHL or acyl-HSL), releasing homoserine lactone (HSL) and the corresponding fatty acid. Possesses a specificity for the degradation of long-chain acyl-HSLs (side chains of 11 to 14 carbons in length). The polypeptide is Acyl-homoserine lactone acylase PvdQ (pvdQ) (Pseudomonas syringae pv. syringae (strain B728a)).